The chain runs to 92 residues: Cell division topological specificity factor (92 aa).

It belongs to the MinE family.

In terms of biological role, prevents the cell division inhibition by proteins MinC and MinD at internal division sites while permitting inhibition at polar sites. This ensures cell division at the proper site by restricting the formation of a division septum at the midpoint of the long axis of the cell. The chain is Cell division topological specificity factor from Colwellia psychrerythraea (strain 34H / ATCC BAA-681) (Vibrio psychroerythus).